The following is a 276-amino-acid chain: Diaminopimelate epimerase (276 aa).

Substrate-binding residues include Asn-13, Gln-46, and Asn-66. Catalysis depends on Cys-75, which acts as the Proton donor. Substrate-binding positions include 76–77 (GN), Asn-159, Asn-192, and 210–211 (ER). Catalysis depends on Cys-219, which acts as the Proton acceptor. A substrate-binding site is contributed by 220–221 (GT).

This sequence belongs to the diaminopimelate epimerase family. Homodimer.

The protein resides in the cytoplasm. The enzyme catalyses (2S,6S)-2,6-diaminopimelate = meso-2,6-diaminopimelate. The protein operates within amino-acid biosynthesis; L-lysine biosynthesis via DAP pathway; DL-2,6-diaminopimelate from LL-2,6-diaminopimelate: step 1/1. Functionally, catalyzes the stereoinversion of LL-2,6-diaminopimelate (L,L-DAP) to meso-diaminopimelate (meso-DAP), a precursor of L-lysine and an essential component of the bacterial peptidoglycan. This Pseudomonas aeruginosa (strain LESB58) protein is Diaminopimelate epimerase.